A 436-amino-acid polypeptide reads, in one-letter code: Ribulose bisphosphate carboxylase large chain (436 aa).

Positions 104 and 154 each coordinate substrate. Lys-156 acts as the Proton acceptor in catalysis. Residue Lys-158 coordinates substrate. Mg(2+) is bound by residues Lys-182, Asp-184, and Glu-185. Lys-182 bears the N6-carboxylysine mark. His-275 functions as the Proton acceptor in the catalytic mechanism. Positions 276, 308, and 360 each coordinate substrate.

This sequence belongs to the RuBisCO large chain family. Type I subfamily. Heterohexadecamer of 8 large chains and 8 small chains; disulfide-linked. The disulfide link is formed within the large subunit homodimers. Mg(2+) serves as cofactor. Post-translationally, the disulfide bond which can form in the large chain dimeric partners within the hexadecamer appears to be associated with oxidative stress and protein turnover.

The protein resides in the plastid. It is found in the chloroplast. It catalyses the reaction 2 (2R)-3-phosphoglycerate + 2 H(+) = D-ribulose 1,5-bisphosphate + CO2 + H2O. The enzyme catalyses D-ribulose 1,5-bisphosphate + O2 = 2-phosphoglycolate + (2R)-3-phosphoglycerate + 2 H(+). RuBisCO catalyzes two reactions: the carboxylation of D-ribulose 1,5-bisphosphate, the primary event in carbon dioxide fixation, as well as the oxidative fragmentation of the pentose substrate in the photorespiration process. Both reactions occur simultaneously and in competition at the same active site. The chain is Ribulose bisphosphate carboxylase large chain from Euglena geniculata.